The primary structure comprises 324 residues: tRNA dimethylallyltransferase (324 aa).

Glycine 18–threonine 25 is a binding site for ATP. Position 20 to 25 (threonine 20 to threonine 25) interacts with substrate. Positions aspartate 43–glutamine 46 are interaction with substrate tRNA.

The protein belongs to the IPP transferase family. In terms of assembly, monomer. It depends on Mg(2+) as a cofactor.

It carries out the reaction adenosine(37) in tRNA + dimethylallyl diphosphate = N(6)-dimethylallyladenosine(37) in tRNA + diphosphate. Functionally, catalyzes the transfer of a dimethylallyl group onto the adenine at position 37 in tRNAs that read codons beginning with uridine, leading to the formation of N6-(dimethylallyl)adenosine (i(6)A). This Salinibacter ruber (strain DSM 13855 / M31) protein is tRNA dimethylallyltransferase.